Consider the following 307-residue polypeptide: HPr kinase/phosphorylase (307 aa).

Catalysis depends on residues His-136 and Lys-157. 151–158 (GESGIGKS) provides a ligand contact to ATP. A Mg(2+)-binding site is contributed by Ser-158. Asp-175 serves as the catalytic Proton acceptor; for phosphorylation activity. Proton donor; for dephosphorylation activity. Residues 198-207 (LEVRGMGIID) are important for the catalytic mechanism of both phosphorylation and dephosphorylation. Residue Glu-199 coordinates Mg(2+). Residue Arg-240 is part of the active site. The interval 261-266 (PIRPGR) is important for the catalytic mechanism of dephosphorylation.

It belongs to the HPrK/P family. As to quaternary structure, homohexamer. Requires Mg(2+) as cofactor.

The enzyme catalyses [HPr protein]-L-serine + ATP = [HPr protein]-O-phospho-L-serine + ADP + H(+). It carries out the reaction [HPr protein]-O-phospho-L-serine + phosphate + H(+) = [HPr protein]-L-serine + diphosphate. In terms of biological role, catalyzes the ATP- as well as the pyrophosphate-dependent phosphorylation of a specific serine residue in HPr, a phosphocarrier protein of the phosphoenolpyruvate-dependent sugar phosphotransferase system (PTS). HprK/P also catalyzes the pyrophosphate-producing, inorganic phosphate-dependent dephosphorylation (phosphorolysis) of seryl-phosphorylated HPr (P-Ser-HPr). The two antagonistic activities of HprK/P are regulated by several intracellular metabolites, which change their concentration in response to the absence or presence of rapidly metabolisable carbon sources (glucose, fructose, etc.) in the growth medium. Therefore, by controlling the phosphorylation state of HPr, HPrK/P is a sensor enzyme that plays a major role in the regulation of carbon metabolism and sugar transport: it mediates carbon catabolite repression (CCR), and regulates PTS-catalyzed carbohydrate uptake and inducer exclusion. The protein is HPr kinase/phosphorylase of Clostridium novyi (strain NT).